Here is a 75-residue protein sequence, read N- to C-terminus: SPbeta prophage-derived uncharacterized protein YorX (75 aa).

In Bacillus subtilis (strain 168), this protein is SPbeta prophage-derived uncharacterized protein YorX (yorX).